The primary structure comprises 663 residues: Transforming growth factor beta activator LRRC32 (663 aa).

Residues 1 to 17 form the signal peptide; it reads MSHQILLLLAMLTLGLA. Residues 18–628 lie on the Extracellular side of the membrane; it reads ISQRREQVPC…CEKGGLKNVN (611 aa). Residues 22-49 enclose the LRRNT domain; sequence REQVPCRTVNKEALCHGLGLLQVPSVLS. 10 LRR repeats span residues 49–72, 73–96, 98–123, 125–148, 149–172, 174–196, 197–220, 222–241, 243–267, and 269–287; these read SLDIQALYLSGNQLQSILVSPLGF, YTALRHLDLSDNQISFLQAGVFQA, PYLEHLNLAHNRLATGMALNSGGLGR, PLLVSLDLSGNSLHGNLVERLLGE, TPRLRTLSLAENSLTRLARHTFWG, PAVEQLDLHSNVLMDIEDGAFEA, LPHLTHLNLSRNSLTCISDFSLQQ, QVLDLSCNSIEAFQTAPEPQ, QFQLAWLDLRENKLLHFPDLAVFPR, and IYLNVSNNLIQLPAGLPRG. Asn-204 is a glycosylation site (N-linked (GlcNAc...) asparagine). N-linked (GlcNAc...) asparagine glycans are attached at residues Asn-272, Asn-305, and Asn-309. A disordered region spans residues 291–311; the sequence is LHAPSEGWSASPLSNPSRNAS. Polar residues predominate over residues 301-311; that stretch reads SPLSNPSRNAS. LRR repeat units lie at residues 315 to 338, 340 to 362, 363 to 386, 387 to 409, 411 to 433, 443 to 466, 468 to 489, 491 to 514, 515 to 539, 541 to 559, and 561 to 584; these read LSQLLNLDLSYNEIELVPASFLEH, TSLRFLNLSRNCLRSFEARQVDS, LPCLVLLDLSHNVLEALELGTKVL, GSLQTLLLQDNALQELPPYTFAS, ASLQRLNLQGNQVSPCGGPAEPG, IPTLHVLNMAGNSMGMLRAGSFLH, PLTELDLSTNPGLDVATGALVG, EASLEVLELQGNGLTVLRVDLPCF, LRLKRLNLAENQLSHLPAWTRAVSL, VLDLRNNSFSLLPGNAMGG, and ETSLRRLYLQGNPLSCCGNGWLAA. A glycan (N-linked (GlcNAc...) asparagine) is linked at Asn-346. An N-linked (GlcNAc...) asparagine glycan is attached at Asn-546. One can recognise an LRRCT domain in the interval 572 to 621; sequence NPLSCCGNGWLAAQLHQGRVDVDATQDLICRFGSQEELSLSLVRPEDCEK. A helical membrane pass occupies residues 629 to 649; it reads LILLLSFTLVSAIVLTTLATI. Residues 650-663 are Cytoplasmic-facing; sequence CFLRRQKLSQQYKA.

It belongs to the LRRC32/LRRC33 family. In terms of assembly, interacts with TGFB1; associates via disulfide bonds with the Latency-associated peptide chain (LAP) regulatory chain of TGFB1, leading to regulate activation of TGF-beta-1. Interacts with TGFB2. Interacts with TGFB3; associates via disulfide bonds with the Latency-associated peptide chain (LAP) regulatory chain of TGFB3, leading to regulate activation of TGF-beta-3. Interacts with LAPTM4B; decreases TGFB1 production in regulatory T-cells. As to expression, present in medial edge epithelial cells at 14.5 dpc (at protein level).

Its subcellular location is the cell membrane. The protein resides in the cell surface. Functionally, key regulator of transforming growth factor beta (TGFB1, TGFB2 and TGFB3) that controls TGF-beta activation by maintaining it in a latent state during storage in extracellular space. Associates specifically via disulfide bonds with the Latency-associated peptide (LAP), which is the regulatory chain of TGF-beta, and regulates integrin-dependent activation of TGF-beta. Able to outcompete LTBP1 for binding to LAP regulatory chain of TGF-beta. Controls activation of TGF-beta-1 (TGFB1) on the surface of activated regulatory T-cells (Tregs). Required for epithelial fusion during palate development by regulating activation of TGF-beta-3 (TGFB3). In Mus musculus (Mouse), this protein is Transforming growth factor beta activator LRRC32.